Consider the following 437-residue polypeptide: Adenylosuccinate synthetase (437 aa).

Residues 12 to 18 and 40 to 42 each bind GTP; these read GDEGKGK and GHT. The active-site Proton acceptor is the D13. Mg(2+) contacts are provided by D13 and G40. Residues 13–16, 38–41, T128, R142, Q223, T238, and R302 each bind IMP; these read DEGK and NAGH. The active-site Proton donor is the H41. 298–304 serves as a coordination point for substrate; sequence TTTGRRR. GTP is bound by residues R304, 330 to 332, and 412 to 414; these read KLD and SLG.

This sequence belongs to the adenylosuccinate synthetase family. As to quaternary structure, homodimer. Mg(2+) serves as cofactor.

It is found in the cytoplasm. It catalyses the reaction IMP + L-aspartate + GTP = N(6)-(1,2-dicarboxyethyl)-AMP + GDP + phosphate + 2 H(+). It participates in purine metabolism; AMP biosynthesis via de novo pathway; AMP from IMP: step 1/2. Functionally, plays an important role in the de novo pathway of purine nucleotide biosynthesis. Catalyzes the first committed step in the biosynthesis of AMP from IMP. The sequence is that of Adenylosuccinate synthetase from Parasynechococcus marenigrum (strain WH8102).